The following is a 174-amino-acid chain: Thioredoxin O, mitochondrial (174 aa).

The transit peptide at 1–59 directs the protein to the mitochondrion; it reads MALAHRLCRLPRLLPLAAAAAASKPYLPGKPSPAPPPPLSSPPPFPSLSRLFSTTPSSS. The Thioredoxin domain maps to 60–172; it reads GDSSMVVVGS…LESTMESLHK (113 aa). Residues Cys-96 and Cys-99 each act as nucleophile in the active site. The cysteines at positions 96 and 99 are disulfide-linked.

This sequence belongs to the thioredoxin family. Plant O-type subfamily.

Its subcellular location is the mitochondrion. In terms of biological role, probable thiol-disulfide oxidoreductase that may participate in various redox reactions. This Oryza sativa subsp. japonica (Rice) protein is Thioredoxin O, mitochondrial.